The following is a 144-amino-acid chain: Large ribosomal subunit protein uL13 (144 aa).

The protein belongs to the universal ribosomal protein uL13 family. As to quaternary structure, part of the 50S ribosomal subunit.

Its function is as follows. This protein is one of the early assembly proteins of the 50S ribosomal subunit, although it is not seen to bind rRNA by itself. It is important during the early stages of 50S assembly. The protein is Large ribosomal subunit protein uL13 of Ruminiclostridium cellulolyticum (strain ATCC 35319 / DSM 5812 / JCM 6584 / H10) (Clostridium cellulolyticum).